A 337-amino-acid polypeptide reads, in one-letter code: Cytoskeleton protein RodZ (337 aa).

At 1–111 (MNTEATHDQN…LGKRRKKRDG (111 aa)) the chain is on the cytoplasmic side. The HTH cro/C1-type domain occupies 19 to 71 (LRNAREQLGLSQQAVAERLCLKVSTVRDIEEDKAPADLASTFLRGYIRSYARL). Positions 30–49 (QQAVAERLCLKVSTVRDIEE) form a DNA-binding region, H-T-H motif. Residues 112 to 132 (WLMTFTWLVLFVVIGLSGAWW) traverse the membrane as a helical; Signal-anchor for type II membrane protein segment. Topologically, residues 133-337 (WQDHKAQQEE…TLNAEQSPAQ (205 aa)) are periplasmic. A compositionally biased stretch (polar residues) spans 145-167 (TMADQSSAELSSNSEQGQSVPLN). Residues 145–236 (TMADQSSAEL…TAATTPDGAA (92 aa)) are disordered. Low complexity predominate over residues 168-207 (TSTTTDPATTSTPPASVDTTATNTQTPVVTAPAPAVDPQQ). The segment covering 208–218 (NAVVSPSQANV) has biased composition (polar residues). Residues 219-236 (DTAATPAPTAATTPDGAA) show a composition bias toward low complexity.

Belongs to the RodZ family.

It localises to the cell inner membrane. Functionally, cytoskeletal protein that is involved in cell-shape control through regulation of the length of the long axis. In Escherichia coli O157:H7, this protein is Cytoskeleton protein RodZ.